Reading from the N-terminus, the 220-residue chain is Protein GrpE (220 aa).

2 stretches are compositionally biased toward polar residues: residues 1 to 12 (MEQGDKQATYNE) and 50 to 63 (AASTTADPAEQTSV). Residues 1–67 (MEQGDKQATY…AEQTSVEAEE (67 aa)) form a disordered region.

This sequence belongs to the GrpE family. In terms of assembly, homodimer.

Its subcellular location is the cytoplasm. Functionally, participates actively in the response to hyperosmotic and heat shock by preventing the aggregation of stress-denatured proteins, in association with DnaK and GrpE. It is the nucleotide exchange factor for DnaK and may function as a thermosensor. Unfolded proteins bind initially to DnaJ; upon interaction with the DnaJ-bound protein, DnaK hydrolyzes its bound ATP, resulting in the formation of a stable complex. GrpE releases ADP from DnaK; ATP binding to DnaK triggers the release of the substrate protein, thus completing the reaction cycle. Several rounds of ATP-dependent interactions between DnaJ, DnaK and GrpE are required for fully efficient folding. This chain is Protein GrpE, found in Geobacillus thermodenitrificans (strain NG80-2).